Consider the following 284-residue polypeptide: Tryptophan 2,3-dioxygenase (284 aa).

Substrate is bound by residues 51–55 (FIIQH), Y113, and R117. H240 is a binding site for heme. T254 is a substrate binding site.

Belongs to the tryptophan 2,3-dioxygenase family. Homotetramer. The cofactor is heme.

It carries out the reaction L-tryptophan + O2 = N-formyl-L-kynurenine. It functions in the pathway amino-acid degradation; L-tryptophan degradation via kynurenine pathway; L-kynurenine from L-tryptophan: step 1/2. Its function is as follows. Heme-dependent dioxygenase that catalyzes the oxidative cleavage of the L-tryptophan (L-Trp) pyrrole ring and converts L-tryptophan to N-formyl-L-kynurenine. Catalyzes the oxidative cleavage of the indole moiety. This is Tryptophan 2,3-dioxygenase from Arthrobacter sp. (strain FB24).